Reading from the N-terminus, the 480-residue chain is Plant UBX domain-containing protein 10 (480 aa).

Disordered stretches follow at residues 47 to 78 and 335 to 383; these read DASS…PRGI and ADQA…AARV. Residues 330-389 adopt a coiled-coil conformation; that stretch reads RAALEADQAREQQRQEEKERLEREAAEAERKLKEEEEARERAAREAEERQAARVRMRQEK. Positions 336 to 383 are enriched in basic and acidic residues; it reads DQAREQQRQEEKERLEREAAEAERKLKEEEEARERAAREAEERQAARV. The 79-residue stretch at 399–477 folds into the UBX domain; sequence KGPDVTQVLV…GLHPQASLFI (79 aa).

This is Plant UBX domain-containing protein 10 from Arabidopsis thaliana (Mouse-ear cress).